Reading from the N-terminus, the 301-residue chain is Nodulation protein D 3 (301 aa).

The region spanning leucine 6–threonine 63 is the HTH lysR-type domain. A DNA-binding region (H-T-H motif) is located at residues leucine 23 to arginine 43.

Belongs to the LysR transcriptional regulatory family.

In terms of biological role, nodD regulates the expression of the nodABCFE genes which encode other nodulation proteins. NodD is also a negative regulator of its own expression. Binds flavonoids as inducers. The protein is Nodulation protein D 3 (nodD3) of Mesorhizobium japonicum (strain LMG 29417 / CECT 9101 / MAFF 303099) (Mesorhizobium loti (strain MAFF 303099)).